The following is a 206-amino-acid chain: Small ribosomal subunit protein uS4 (206 aa).

The segment at 15-46 (MGENIWGRPKSPVNKREYGPGQHGQRRKNKLS) is disordered. In terms of domain architecture, S4 RNA-binding spans 94–157 (RRLDAIVYRA…RQLAIVLEAT (64 aa)).

This sequence belongs to the universal ribosomal protein uS4 family. As to quaternary structure, part of the 30S ribosomal subunit. Contacts protein S5. The interaction surface between S4 and S5 is involved in control of translational fidelity.

Functionally, one of the primary rRNA binding proteins, it binds directly to 16S rRNA where it nucleates assembly of the body of the 30S subunit. In terms of biological role, with S5 and S12 plays an important role in translational accuracy. In Cereibacter sphaeroides (strain ATCC 17025 / ATH 2.4.3) (Rhodobacter sphaeroides), this protein is Small ribosomal subunit protein uS4.